The sequence spans 236 residues: MTTPANTTQAVGSTTSTTTTTAGATPANSGLFTIPDGDFFSTAKVVVASNAVATNEDLTKIQKIWKDMKIPSDTMAQAAWDLVRHCADVGSSAQTEMIGTGPYSNGVSRARLAAAIKEVCKLRQFCRKYAPVVWNWMLTNNSPPANWQAQGFKPEHKFAAFDFFDGVTNPAAITPKEGLIRPPFEAEMNAAQTATFVKITKARAQSNDFASLDAAVTRGRITGTTAAEAVISLPPP.

A disordered region spans residues 1–27 (MTTPANTTQAVGSTTSTTTTTAGATPA). Over residues 7 to 27 (TTQAVGSTTSTTTTTAGATPA) the composition is skewed to low complexity.

It belongs to the potexvirus capsid protein family.

Its subcellular location is the virion. Its function is as follows. Required for genome encapsidation. Forms ribonucleoprotein complexes along with TGB1 helicase and viral RNA. The protein is Coat protein of Brassica campestris (Field mustard).